A 541-amino-acid polypeptide reads, in one-letter code: Atlastin-3 (541 aa).

Positions 1-22 (MLSPQRTAAVASRGAGDAMENG) are disordered. The interval 1–25 (MLSPQRTAAVASRGAGDAMENGKPG) is N-terminal hypervariable region (HVR). The Cytoplasmic portion of the chain corresponds to 1–445 (MLSPQRTAAV…NVFSTFRTPA (445 aa)). The region spanning 57-306 (DLDVVVVSVA…LIPYVLNPSK (250 aa)) is the GB1/RHD3-type G domain. GDP contacts are provided by arginine 70, lysine 71, glycine 72, lysine 73, serine 74, phenylalanine 75, and arginine 109. Position 142 (aspartate 142) interacts with Mg(2+). The GDP site is built by arginine 213, aspartate 214, valine 272, and serine 275. Positions 344–434 (MLQATAANNL…YENFCKHNGS (91 aa)) are 3HB (three-helix bundle) domain. Lysine 391 carries the N6-acetyllysine modification. Residues 446–466 (VLFTGIAVLYIASGLTGFIGL) form a helical membrane-spanning segment. Residue glutamate 467 is a topological domain, lumenal. The chain crosses the membrane as a helical span at residues 468 to 488 (VVAQLFNCMVGLLLIALLTWG). The Cytoplasmic segment spans residues 489–541 (YIRYSGQYLELGGAIDSGAAYVLEQASSHIGNSTQAAVRDAIAGRPPADKKSQ).

It belongs to the TRAFAC class dynamin-like GTPase superfamily. GB1/RHD3 GTPase family. GB1 subfamily. Monomeric and homodimeric. The homodimer, transiently formed by two molecules on opposing membranes, is the active form mediating ER membrane fusion. Interacts with ZFYVE27; both proteins are involved in endoplasmic reticulum tubular network organization. Interacts with REEP5; both proteins are involved in endoplasmic reticulum tubular network organization.

The protein localises to the endoplasmic reticulum membrane. It catalyses the reaction GTP + H2O = GDP + phosphate + H(+). In terms of biological role, atlastin-3 (ATL3) is a membrane-anchored GTPase that mediates the GTP-dependent fusion of endoplasmic reticulum (ER) membranes, maintaining the continuous ER network. It facilitates the formation of three-way junctions where ER tubules intersect. Two atlastin-3 on neighboring ER tubules bind GTP and form loose homodimers through the GB1/RHD3-type G domains and 3HB regions. Upon GTP hydrolysis, the 3HB regions tighten, pulling the membranes together to drive their fusion. After fusion, the homodimer disassembles upon release of inorganic phosphate (Pi). Subsequently, GDP dissociates, resetting the monomers to a conformation ready for a new fusion cycle. This chain is Atlastin-3, found in Rattus norvegicus (Rat).